The chain runs to 421 residues: Serine hydroxymethyltransferase (421 aa).

(6S)-5,6,7,8-tetrahydrofolate contacts are provided by residues leucine 121 and 125 to 127 (GHL). Residue lysine 229 is modified to N6-(pyridoxal phosphate)lysine.

This sequence belongs to the SHMT family. Homodimer. Requires pyridoxal 5'-phosphate as cofactor.

Its subcellular location is the cytoplasm. It catalyses the reaction (6R)-5,10-methylene-5,6,7,8-tetrahydrofolate + glycine + H2O = (6S)-5,6,7,8-tetrahydrofolate + L-serine. Its pathway is one-carbon metabolism; tetrahydrofolate interconversion. The protein operates within amino-acid biosynthesis; glycine biosynthesis; glycine from L-serine: step 1/1. Its function is as follows. Catalyzes the reversible interconversion of serine and glycine with tetrahydrofolate (THF) serving as the one-carbon carrier. This reaction serves as the major source of one-carbon groups required for the biosynthesis of purines, thymidylate, methionine, and other important biomolecules. Also exhibits THF-independent aldolase activity toward beta-hydroxyamino acids, producing glycine and aldehydes, via a retro-aldol mechanism. The protein is Serine hydroxymethyltransferase of Actinobacillus pleuropneumoniae serotype 7 (strain AP76).